The primary structure comprises 315 residues: 1,2-dihydroxy-3,5-cyclohexadiene-1,4-dicarboxylate dehydrogenase (315 aa).

Residues histidine 159, histidine 203, and histidine 255 each contribute to the a divalent metal cation site.

This sequence belongs to the PdxA family.

The enzyme catalyses (3S,4R)-3,4-dihydroxycyclohexa-1,5-diene-1,4-dicarboxylate + NAD(+) = 3,4-dihydroxybenzoate + CO2 + NADH. In terms of biological role, involved in the degradation of terephthalate (TPA) via the protocatechuate (PCA) 4,5-cleavage pathway. Catalyzes the dehydrogenation of 1,2-dihydroxy-3,5-cyclohexadiene-1,4-dicarboxylate (DCD) to yield protocatechuate (PCA). In Comamonas sp, this protein is 1,2-dihydroxy-3,5-cyclohexadiene-1,4-dicarboxylate dehydrogenase (tphBI).